Here is a 160-residue protein sequence, read N- to C-terminus: Tic20 family protein (160 aa).

4 helical membrane passes run 13 to 33 (FFSALIYVIPLIDAFMFGGFL), 53 to 73 (FYYQFPFASFIIFIVLFMAVV), 87 to 107 (MQAILIGILLSLFGLIVAYVI), and 122 to 142 (NFAFLGALACGFFGIVQSVLG).

This sequence belongs to the Tic20 family.

It is found in the cell membrane. This chain is Tic20 family protein, found in Synechocystis sp. (strain ATCC 27184 / PCC 6803 / Kazusa).